The chain runs to 415 residues: MADLIVGIQWGDEGKGKVVDALAGEYDYVVRYQGGHNAGHTIVVDSKKIALHLLPSGILYERCKNVIGNGVVINLEQLLNESKAFGNLQGRLFISDRAHIILPYHEILDIAKEKSRQSAAIGTTGKGIGPCYGDKVSRNGVRLMDLKNLDKLREKVDSIYQHIQYVQTLYNVELPSVQSVMEHIESIAPQILPFVTDTTQLLWAAQNRGEKILCEGAQGSMLDIDHGTYPFVTSSTTIASGACSGSGLAPRDIARVIGVAKAYCTRVGNGMFPTQEDGEIGERLRQAGGEFGTTTGRARRCGWFDAVAVRYACRLNGCESLSIMKLDVLDGFERVKVCVGYEYEGKQIDYIPTDYDNVKPIYREFVGWDKTCGVRTFNALPSQAQHYIKELEKIIGVKISMVSTSPERDDMIMLG.

GTP-binding positions include 11–17 (GDEGKGK) and 39–41 (GHT). The Proton acceptor role is filled by aspartate 12. Mg(2+) is bound by residues aspartate 12 and glycine 39. IMP-binding positions include 12–15 (DEGK), 37–40 (NAGH), threonine 124, arginine 138, glutamine 218, threonine 233, and arginine 297. The active-site Proton donor is the histidine 40. Residue 293-299 (TTTGRAR) participates in substrate binding. GTP contacts are provided by residues arginine 299, 325-327 (KLD), and 403-405 (STS).

The protein belongs to the adenylosuccinate synthetase family. As to quaternary structure, homodimer. Mg(2+) serves as cofactor.

The protein localises to the cytoplasm. It catalyses the reaction IMP + L-aspartate + GTP = N(6)-(1,2-dicarboxyethyl)-AMP + GDP + phosphate + 2 H(+). The protein operates within purine metabolism; AMP biosynthesis via de novo pathway; AMP from IMP: step 1/2. Plays an important role in the de novo pathway of purine nucleotide biosynthesis. Catalyzes the first committed step in the biosynthesis of AMP from IMP. This chain is Adenylosuccinate synthetase, found in Helicobacter hepaticus (strain ATCC 51449 / 3B1).